The chain runs to 240 residues: Glutamine amidotransferase-like protein chry6 (240 aa).

A Glutamine amidotransferase type-1 domain is found at 13–205 (NFILDDTGGR…FVASDNPVLV (193 aa)). Cys-102 acts as the Nucleophile in catalysis. Active-site residues include His-185 and Glu-187.

It belongs to the peptidase C26 family.

It participates in pigment biosynthesis. Functionally, glutamine amidotransferase-like protein; part of the gene cluster that mediates the biosynthesis of the yellow pigment chrysogine. Pyruvic acid and anthranilic acid are likely substrates for the nonribosomal peptide synthetase chry1/NRPS14, with pyruvic acid adenylated by the first A domain and anthranilic acid by the second. If pyruvic acid and anthranilic acid are merged and released from chry1/NRPS14 by hydrolysis, a subsequent amidation would lead to 2-pyruvoylaminobenzamide. This process is probably catalyzed by the amidotransferase chry2 using glutamine as amino donor. The dehydrogenase chry5 that has a terminal berberine bridge domain for C-N cyclization could catalyze the cyclization of 2-pyruvoylaminobenzamide to yield acetyl-4(3H)-quinazolidinone. A final reduction of acetyl-4(3H)-quinazolidinone catalyzed by the oxidoreductase chry4 would result in chrysogine. The protein is Glutamine amidotransferase-like protein chry6 of Gibberella zeae (strain ATCC MYA-4620 / CBS 123657 / FGSC 9075 / NRRL 31084 / PH-1) (Wheat head blight fungus).